Reading from the N-terminus, the 340-residue chain is Adenosine receptor A2b (340 aa).

Topologically, residues 1–6 (MNTMKT) are extracellular. The chain crosses the membrane as a helical span at residues 7–31 (TYIVLELIIAVLSIAGNVLVCWAVA). Residues 32–41 (INSTLKNATN) lie on the Cytoplasmic side of the membrane. The chain crosses the membrane as a helical span at residues 42–65 (YFLVSLAVADIAVGLLAIPFAITI). Topologically, residues 66 to 76 (SIGFQVDFHSC) are extracellular. A disulfide bridge links Cys76 with Cys171. A helical membrane pass occupies residues 77–99 (LFFACFVLVLTQSSIFSLLAVAI). Residues 100-119 (DRYLAIKIPLRYNSLVTGKR) lie on the Cytoplasmic side of the membrane. Residues 120–142 (ARGLIAVLWLLSFVIGLTPLMGW) form a helical membrane-spanning segment. Residues 143-178 (NKAMSGCPNSTNETGADHGAGHHGCFISCLFENVVT) are Extracellular-facing. Asn151 and Asn154 each carry an N-linked (GlcNAc...) asparagine glycan. Glu174 lines the adenosine pocket. Residues 179-203 (MSYMVYFNFFGCVLLPLIIMLGIYI) form a helical membrane-spanning segment. Topologically, residues 204-235 (KIFMVACKQLHQIELMGNSRTTLQKEVHAAKS) are cytoplasmic. A helical transmembrane segment spans residues 236–259 (LAIIVGLFAFCWLPLHILNCITHF). Adenosine is bound at residue Asn254. The Extracellular portion of the chain corresponds to 260–267 (HEEFSKSK). A helical membrane pass occupies residues 268–291 (PEWVMYVAIILSHANSVINPIIYA). Positions 279 and 280 each coordinate adenosine. The Cytoplasmic segment spans residues 292-340 (YRIRDFRYTFHKIISKILCKTDDFPKCTTDNNQHLTVTNVNAPAASVTI). Cys310 carries the S-palmitoyl cysteine lipid modification.

This sequence belongs to the G-protein coupled receptor 1 family.

The protein localises to the cell membrane. Its function is as follows. Receptor for adenosine. The activity of this receptor is mediated by G proteins which activate adenylyl cyclase. The protein is Adenosine receptor A2b (ADORA2B) of Gallus gallus (Chicken).